The sequence spans 201 residues: MPQAVAGPEIERLIQLLARMPGLGPRSARRAALQLIKKRDTLLGPLADAMRVAADRIVVCTSCGNVDTSDPCTICRDAERDPTTLVVVEDVSDLWALERSGAVKARYHVLGGVLSALDGVRPEHLNLASLVERVARPEVTEVILALNATVDGQTTAHYVTESIRHCDVKVTRLAHGVPVGGELDYLDEGTLSAAIRSRTAF.

A C4-type zinc finger spans residues 60–75 (CTSCGNVDTSDPCTIC). In terms of domain architecture, Toprim spans 83–178 (TTLVVVEDVS…KVTRLAHGVP (96 aa)).

It belongs to the RecR family.

In terms of biological role, may play a role in DNA repair. It seems to be involved in an RecBC-independent recombinational process of DNA repair. It may act with RecF and RecO. This chain is Recombination protein RecR, found in Methylobacterium radiotolerans (strain ATCC 27329 / DSM 1819 / JCM 2831 / NBRC 15690 / NCIMB 10815 / 0-1).